Reading from the N-terminus, the 514-residue chain is ATP synthase subunit alpha (514 aa).

169–176 (GDRQTGKT) is a binding site for ATP.

This sequence belongs to the ATPase alpha/beta chains family. F-type ATPases have 2 components, CF(1) - the catalytic core - and CF(0) - the membrane proton channel. CF(1) has five subunits: alpha(3), beta(3), gamma(1), delta(1), epsilon(1). CF(0) has three main subunits: a(1), b(2) and c(9-12). The alpha and beta chains form an alternating ring which encloses part of the gamma chain. CF(1) is attached to CF(0) by a central stalk formed by the gamma and epsilon chains, while a peripheral stalk is formed by the delta and b chains.

The protein resides in the cell membrane. It catalyses the reaction ATP + H2O + 4 H(+)(in) = ADP + phosphate + 5 H(+)(out). Produces ATP from ADP in the presence of a proton gradient across the membrane. The alpha chain is a regulatory subunit. In Buchnera aphidicola subsp. Baizongia pistaciae (strain Bp), this protein is ATP synthase subunit alpha.